Reading from the N-terminus, the 283-residue chain is Pantothenate synthetase (283 aa).

30 to 37 (MGNLHSGH) contributes to the ATP binding site. The Proton donor role is filled by His37. Position 61 (Gln61) interacts with (R)-pantoate. Residue Gln61 participates in beta-alanine binding. 149–152 (GQKD) serves as a coordination point for ATP. Gln155 serves as a coordination point for (R)-pantoate. Residues Val178 and 186 to 189 (LSSR) each bind ATP.

The protein belongs to the pantothenate synthetase family. In terms of assembly, homodimer.

The protein localises to the cytoplasm. The enzyme catalyses (R)-pantoate + beta-alanine + ATP = (R)-pantothenate + AMP + diphosphate + H(+). Its pathway is cofactor biosynthesis; (R)-pantothenate biosynthesis; (R)-pantothenate from (R)-pantoate and beta-alanine: step 1/1. Catalyzes the condensation of pantoate with beta-alanine in an ATP-dependent reaction via a pantoyl-adenylate intermediate. The polypeptide is Pantothenate synthetase (Pseudomonas fluorescens (strain SBW25)).